Here is a 65-residue protein sequence, read N- to C-terminus: Large ribosomal subunit protein uL30 (65 aa).

It belongs to the universal ribosomal protein uL30 family. As to quaternary structure, part of the 50S ribosomal subunit.

The sequence is that of Large ribosomal subunit protein uL30 from Mesorhizobium japonicum (strain LMG 29417 / CECT 9101 / MAFF 303099) (Mesorhizobium loti (strain MAFF 303099)).